Consider the following 60-residue polypeptide: Large ribosomal subunit protein bL32 (60 aa).

The protein belongs to the bacterial ribosomal protein bL32 family.

The chain is Large ribosomal subunit protein bL32 from Streptococcus pneumoniae serotype 4 (strain ATCC BAA-334 / TIGR4).